The following is a 603-amino-acid chain: Glutamyl-tRNA(Gln) amidotransferase subunit E (603 aa).

This sequence belongs to the GatB/GatE family. GatE subfamily. Heterodimer of GatD and GatE.

It catalyses the reaction L-glutamyl-tRNA(Gln) + L-glutamine + ATP + H2O = L-glutaminyl-tRNA(Gln) + L-glutamate + ADP + phosphate + H(+). Functionally, allows the formation of correctly charged Gln-tRNA(Gln) through the transamidation of misacylated Glu-tRNA(Gln) in organisms which lack glutaminyl-tRNA synthetase. The reaction takes place in the presence of glutamine and ATP through an activated gamma-phospho-Glu-tRNA(Gln). The GatDE system is specific for glutamate and does not act on aspartate. This chain is Glutamyl-tRNA(Gln) amidotransferase subunit E, found in Thermoplasma acidophilum (strain ATCC 25905 / DSM 1728 / JCM 9062 / NBRC 15155 / AMRC-C165).